The chain runs to 390 residues: Methylthioribose-1-phosphate isomerase (390 aa).

Residues 53-55 (RGA), R90, and Q207 contribute to the substrate site. The active-site Proton donor is D248. Substrate is bound at residue 258 to 259 (NK).

Belongs to the EIF-2B alpha/beta/delta subunits family. MtnA subfamily.

The enzyme catalyses 5-(methylsulfanyl)-alpha-D-ribose 1-phosphate = 5-(methylsulfanyl)-D-ribulose 1-phosphate. It catalyses the reaction 5-deoxy-alpha-D-ribose 1-phosphate = 5-deoxy-D-ribulose 1-phosphate. The protein operates within amino-acid biosynthesis; L-methionine biosynthesis via salvage pathway; L-methionine from S-methyl-5-thio-alpha-D-ribose 1-phosphate: step 1/6. Functionally, catalyzes the interconversion of methylthioribose-1-phosphate (MTR-1-P) into methylthioribulose-1-phosphate (MTRu-1-P). Also catalyzes the interconversion of 5-deoxyribose 1-phosphate and 5-deoxyribulose 1-phosphate. Part of a bifunctional DHAP-shunt salvage pathway for SAM by-products. The protein is Methylthioribose-1-phosphate isomerase of Rhodospirillum rubrum (strain ATCC 11170 / ATH 1.1.1 / DSM 467 / LMG 4362 / NCIMB 8255 / S1).